We begin with the raw amino-acid sequence, 317 residues long: Olfactory receptor 2F2 (317 aa).

At 1-25 the chain is on the extracellular side; it reads MEIDNQTWVREFILLGLSSDWCTQI. N-linked (GlcNAc...) asparagine glycosylation occurs at Asn-5. A helical transmembrane segment spans residues 26–49; it reads SLFSLFLVTYLMTVLGNCLIVLLI. At 50-57 the chain is on the cytoplasmic side; it reads RLDSRLHT. Residues 58–79 form a helical membrane-spanning segment; it reads PMYFFLTNLSLVDVSYATSVVP. The Extracellular segment spans residues 80-100; the sequence is QLLAHFLAEHKAIPFQSCAAQ. An intrachain disulfide couples Cys-97 to Cys-189. Residues 101 to 120 traverse the membrane as a helical segment; sequence LFFSLALGGIEFVLLAVMAY. Residues 121–139 lie on the Cytoplasmic side of the membrane; that stretch reads DRHVAVSDRLRYSAIMHGG. The helical transmembrane segment at 140–158 threads the bilayer; the sequence is LCARLAITSWVSGSINSLV. At 159 to 195 the chain is on the extracellular side; it reads QTAITFQLPMCTNKFIDHISCELLAVVRLACVDTSSN. The chain crosses the membrane as a helical span at residues 196–219; the sequence is EAAIMVSSIVLLMTPFCLVLLSYI. Topologically, residues 220 to 236 are cytoplasmic; it reads RIISTILKIQSREGRKK. The helical transmembrane segment at 237–259 threads the bilayer; that stretch reads AFHTCASHLTVVALCYGTTIFTY. Topologically, residues 260-272 are extracellular; sequence IQPHSGPSVLQEK. A helical membrane pass occupies residues 273–292; that stretch reads LISVFYAIVMPLLNPVIYSL. Residues 293 to 317 are Cytoplasmic-facing; sequence RNKEVKGAWHKLLEKFSGLTSKLGT.

This sequence belongs to the G-protein coupled receptor 1 family.

Its subcellular location is the cell membrane. Odorant receptor. The polypeptide is Olfactory receptor 2F2 (OR2F2) (Homo sapiens (Human)).